The following is a 430-amino-acid chain: Bifunctional protein GlmU (430 aa).

The interval 1–223 (MSFSVVILAA…KNEFQGVNSK (223 aa)) is pyrophosphorylase. Residues 8-11 (LAAG), Lys-22, and 81-82 (GT) each bind UDP-N-acetyl-alpha-D-glucosamine. Mg(2+) is bound at residue Asp-102. Gly-135, Glu-149, Asn-164, and Asn-221 together coordinate UDP-N-acetyl-alpha-D-glucosamine. Position 221 (Asn-221) interacts with Mg(2+). A linker region spans residues 224-244 (YDLANAEIVMQDRIKRHWMQQ). An N-acetyltransferase region spans residues 245-430 (GVIMRLPQTI…DFYYKFFGKN (186 aa)). Positions 308 and 325 each coordinate UDP-N-acetyl-alpha-D-glucosamine. The active-site Proton acceptor is His-336. UDP-N-acetyl-alpha-D-glucosamine contacts are provided by Tyr-339 and Asn-350. Residues Ala-353, 359–360 (NY), Ser-378, Ala-396, and Arg-413 each bind acetyl-CoA.

It in the N-terminal section; belongs to the N-acetylglucosamine-1-phosphate uridyltransferase family. The protein in the C-terminal section; belongs to the transferase hexapeptide repeat family. In terms of assembly, homotrimer. Mg(2+) is required as a cofactor.

The protein resides in the cytoplasm. It catalyses the reaction alpha-D-glucosamine 1-phosphate + acetyl-CoA = N-acetyl-alpha-D-glucosamine 1-phosphate + CoA + H(+). The enzyme catalyses N-acetyl-alpha-D-glucosamine 1-phosphate + UTP + H(+) = UDP-N-acetyl-alpha-D-glucosamine + diphosphate. The protein operates within nucleotide-sugar biosynthesis; UDP-N-acetyl-alpha-D-glucosamine biosynthesis; N-acetyl-alpha-D-glucosamine 1-phosphate from alpha-D-glucosamine 6-phosphate (route II): step 2/2. It functions in the pathway nucleotide-sugar biosynthesis; UDP-N-acetyl-alpha-D-glucosamine biosynthesis; UDP-N-acetyl-alpha-D-glucosamine from N-acetyl-alpha-D-glucosamine 1-phosphate: step 1/1. Its pathway is bacterial outer membrane biogenesis; LPS lipid A biosynthesis. Catalyzes the last two sequential reactions in the de novo biosynthetic pathway for UDP-N-acetylglucosamine (UDP-GlcNAc). The C-terminal domain catalyzes the transfer of acetyl group from acetyl coenzyme A to glucosamine-1-phosphate (GlcN-1-P) to produce N-acetylglucosamine-1-phosphate (GlcNAc-1-P), which is converted into UDP-GlcNAc by the transfer of uridine 5-monophosphate (from uridine 5-triphosphate), a reaction catalyzed by the N-terminal domain. This chain is Bifunctional protein GlmU, found in Nitratiruptor sp. (strain SB155-2).